We begin with the raw amino-acid sequence, 432 residues long: 3-phosphoshikimate 1-carboxyvinyltransferase (432 aa).

3-phosphoshikimate contacts are provided by Lys23, Ser24, and Arg28. Residue Lys23 coordinates phosphoenolpyruvate. 2 residues coordinate phosphoenolpyruvate: Gly95 and Arg123. 3-phosphoshikimate contacts are provided by Ser167, Gln169, Asp317, and Lys344. Gln169 is a binding site for phosphoenolpyruvate. Asp317 (proton acceptor) is an active-site residue. Phosphoenolpyruvate-binding residues include Arg348 and Arg390.

The protein belongs to the EPSP synthase family. In terms of assembly, monomer.

It localises to the cytoplasm. The enzyme catalyses 3-phosphoshikimate + phosphoenolpyruvate = 5-O-(1-carboxyvinyl)-3-phosphoshikimate + phosphate. The protein operates within metabolic intermediate biosynthesis; chorismate biosynthesis; chorismate from D-erythrose 4-phosphate and phosphoenolpyruvate: step 6/7. Its function is as follows. Catalyzes the transfer of the enolpyruvyl moiety of phosphoenolpyruvate (PEP) to the 5-hydroxyl of shikimate-3-phosphate (S3P) to produce enolpyruvyl shikimate-3-phosphate and inorganic phosphate. The polypeptide is 3-phosphoshikimate 1-carboxyvinyltransferase (Staphylococcus aureus (strain N315)).